The chain runs to 183 residues: MIKLFSLKQQKKEEESAGGTKGSSKKASAAQLRIQKDITELNLPKTCEIEFSDHDDLLNFKLVICPDEGFYKGGKFVFSFKVGQGYPHDPPKVKCETMVYHPNIDLEGNVCLNILREDWKPVLTINSIIYGLQYLFLEPNPEDPLNKEAAEVLQNNRRLFEQNVQRSMRGGYIGSTYFERCLK.

Position 1 is an N-acetylmethionine (Met-1). A disordered region spans residues 1-28; it reads MIKLFSLKQQKKEEESAGGTKGSSKKAS. Positions 29 to 173 constitute a UBC core domain; that stretch reads AAQLRIQKDI…VQRSMRGGYI (145 aa). Residue Cys-111 is the Glycyl thioester intermediate of the active site.

This sequence belongs to the ubiquitin-conjugating enzyme family. UBC12 subfamily. The acetylation of Met-1 increases affinity for DCUN1D1 by about 2 orders of magnitude and is crucial for NEDD8 transfer to cullins.

The catalysed reaction is [E1 NEDD8-activating enzyme]-S-[NEDD8 protein]-yl-L-cysteine + [E2 NEDD8-conjugating enzyme]-L-cysteine = [E1 NEDD8-activating enzyme]-L-cysteine + [E2 NEDD8-conjugating enzyme]-S-[NEDD8-protein]-yl-L-cysteine.. It functions in the pathway protein modification; protein neddylation. Its function is as follows. Accepts the ubiquitin-like protein NEDD8 from the UBA3-NAE1 E1 complex and catalyzes its covalent attachment to other proteins. The specific interaction with the E3 ubiquitin ligase rbx1, but not rbx2, suggests that the rbx1-ube2m complex neddylates specific target proteins, such as cul1, cul2, cul3 and cul4. Involved in cell proliferation. The chain is NEDD8-conjugating enzyme Ubc12 (ube2m) from Xenopus laevis (African clawed frog).